The chain runs to 293 residues: Fructokinase (293 aa).

Thr-133 provides a ligand contact to ATP. Zn(2+) is bound by residues His-156, Cys-174, His-177, and Cys-180. ATP-binding positions include Pro-188 and Gly-236 to Gln-240.

It belongs to the ROK (NagC/XylR) family. It depends on Mg(2+) as a cofactor.

It catalyses the reaction D-fructose + ATP = D-fructose 6-phosphate + ADP + H(+). Its activity is regulated as follows. Inhibition by zinc ions. This chain is Fructokinase (scrK), found in Streptococcus mutans serotype c (strain ATCC 700610 / UA159).